The following is a 323-amino-acid chain: Protein translocase subunit SecF (323 aa).

Helical transmembrane passes span 19-39 (GVIV…FKGF), 138-158 (ILSL…RYEW), 162-182 (LASV…VIVF), 189-209 (EVIA…IIIF), 244-264 (LTVF…IIGF), and 269-289 (LIGT…VALL).

The protein belongs to the SecD/SecF family. SecF subfamily. As to quaternary structure, forms a complex with SecD. Part of the essential Sec protein translocation apparatus which comprises SecA, SecYEG and auxiliary proteins SecDF-YajC and YidC.

It localises to the cell inner membrane. Its function is as follows. Part of the Sec protein translocase complex. Interacts with the SecYEG preprotein conducting channel. SecDF uses the proton motive force (PMF) to complete protein translocation after the ATP-dependent function of SecA. This Helicobacter pylori (strain J99 / ATCC 700824) (Campylobacter pylori J99) protein is Protein translocase subunit SecF.